We begin with the raw amino-acid sequence, 57 residues long: Beta-defensin 3 (57 aa).

Gln16 carries the post-translational modification Pyrrolidone carboxylic acid. Disulfide bonds link Cys24–Cys53, Cys31–Cys46, and Cys36–Cys54.

It belongs to the beta-defensin family. Neutrophilic granules.

It is found in the secreted. Has bactericidal activity. Active against E.coli ML35 and S.aureus 502A. The protein is Beta-defensin 3 (DEFB3) of Bos taurus (Bovine).